The primary structure comprises 98 residues: MLRSTFTVHWTTILGICRPIKPIYKSQACPLSEKRNADNHLVSEDNTFKEPERYISSSCVLTSILYLGEKTFSFRTLISPRGMKLVEILQQPSLTMVA.

This is an uncharacterized protein from Homo sapiens (Human).